A 199-amino-acid chain; its full sequence is ATP synthase subunit b (199 aa).

The helical transmembrane segment at 5–25 threads the bilayer; the sequence is SFVTTLSVCVMILGLAALGFA.

It belongs to the ATPase B chain family. As to quaternary structure, F-type ATPases have 2 components, F(1) - the catalytic core - and F(0) - the membrane proton channel. F(1) has five subunits: alpha(3), beta(3), gamma(1), delta(1), epsilon(1). F(0) has three main subunits: a(1), b(2) and c(10-14). The alpha and beta chains form an alternating ring which encloses part of the gamma chain. F(1) is attached to F(0) by a central stalk formed by the gamma and epsilon chains, while a peripheral stalk is formed by the delta and b chains.

It localises to the cell inner membrane. Its function is as follows. F(1)F(0) ATP synthase produces ATP from ADP in the presence of a proton or sodium gradient. F-type ATPases consist of two structural domains, F(1) containing the extramembraneous catalytic core and F(0) containing the membrane proton channel, linked together by a central stalk and a peripheral stalk. During catalysis, ATP synthesis in the catalytic domain of F(1) is coupled via a rotary mechanism of the central stalk subunits to proton translocation. In terms of biological role, component of the F(0) channel, it forms part of the peripheral stalk, linking F(1) to F(0). In Citrifermentans bemidjiense (strain ATCC BAA-1014 / DSM 16622 / JCM 12645 / Bem) (Geobacter bemidjiensis), this protein is ATP synthase subunit b.